The sequence spans 347 residues: MDSFFSTYVWPAIIMIGQSLLLLVCLLVFIAYVLLADRKIWAAVQLRRGPNVVGPFGLFQSFADLLKFVFKEPIIPAGANKAVFLLAPLVTVLLALSTWAVVPLADGWVIANINVGILYIFAISSLEVYGIIMGGWASNSKYPFLGALRSAAQMVSYEVSIGFVIVTVLLCVGSLNLTDIVNAQHTGLGTMLGLPASFLDWHWLSLFPMFIIFFISALAETNRPPFDLPEAESELVAGFMVEYGSSPYMMFMLGEYAAVCLMCALTTILFLGGWLPPVDIWILNWVPGIIWFTLKACFVFFMFAMVKAFVPRYRYDQLMRLGWKVFLPLSLAMVVIVAFVLKLMGWA.

9 helical membrane passes run 13–33, 50–70, 82–102, 115–135, 161–181, 198–218, 263–283, 286–306, and 321–341; these read IIMI…IAYV, PNVV…KFVF, AVFL…WAVV, VGIL…IMGG, IGFV…TDIV, FLDW…ISAL, CALT…IWIL, VPGI…FAMV, and LGWK…AFVL.

This sequence belongs to the complex I subunit 1 family. In terms of assembly, NDH-1 is composed of 14 different subunits. Subunits NuoA, H, J, K, L, M, N constitute the membrane sector of the complex.

It is found in the cell inner membrane. It catalyses the reaction a quinone + NADH + 5 H(+)(in) = a quinol + NAD(+) + 4 H(+)(out). NDH-1 shuttles electrons from NADH, via FMN and iron-sulfur (Fe-S) centers, to quinones in the respiratory chain. The immediate electron acceptor for the enzyme in this species is believed to be ubiquinone. Couples the redox reaction to proton translocation (for every two electrons transferred, four hydrogen ions are translocated across the cytoplasmic membrane), and thus conserves the redox energy in a proton gradient. This subunit may bind ubiquinone. The sequence is that of NADH-quinone oxidoreductase subunit H from Rhizobium johnstonii (strain DSM 114642 / LMG 32736 / 3841) (Rhizobium leguminosarum bv. viciae).